Reading from the N-terminus, the 123-residue chain is MASHVECRPLGVFECELCTLTAPYSYVGQKPPNTQSMVLLEESYVMKDPFTSDKDRFLVLGSCCSLCSRLVCVGPECSLFYSKRFCLPCVRENINAFPQEIRQDLEKRKAPSKRTPSQPGSRT.

The interval 102 to 123 is disordered; it reads RQDLEKRKAPSKRTPSQPGSRT. Over residues 114-123 the composition is skewed to polar residues; sequence RTPSQPGSRT.

It belongs to the CDPF1 family.

This is Cysteine-rich DPF motif domain-containing protein 1 (CDPF1) from Homo sapiens (Human).